A 178-amino-acid chain; its full sequence is Protein PilI (178 aa).

A CheW-like domain is found at 34–173; the sequence is SWSGIGFRMG…PHALAQHQGF (140 aa).

In terms of biological role, may be a part of a signal-transduction system that regulates twitching motility by controlling pilus function (extension and retraction). In Pseudomonas aeruginosa (strain ATCC 15692 / DSM 22644 / CIP 104116 / JCM 14847 / LMG 12228 / 1C / PRS 101 / PAO1), this protein is Protein PilI (pilI).